Consider the following 1585-residue polypeptide: Sterol 3-beta-glucosyltransferase (1585 aa).

The span at 1–18 (MSPPISPTPPPLQPPFPP) shows a compositional bias: pro residues. Disordered stretches follow at residues 1-154 (MSPP…CDFR), 177-225 (PWEE…PTHT), and 249-279 (YQYA…LPKG). Polar residues-rich tracts occupy residues 65–77 (DQAT…SLIP), 105–123 (DAQT…STHE), and 132–148 (PRTS…QMAE). Residues 178–194 (WEEDDDSDDGEDDDEFI) show a composition bias toward acidic residues. The segment covering 255–273 (ETSSRRTSAAGSESSSEGE) has biased composition (low complexity). Residues 387–555 (ERLMEVFGLE…EAIVDVEKSP (169 aa)) form the GRAM 1 domain. A PH domain is found at 438–530 (LLVKSGPLHK…WVKAIQKVMF (93 aa)). Disordered stretches follow at residues 625–645 (TSHA…LGMA) and 666–852 (DGEP…GSES). The span at 670 to 689 (LEEHSQGPHHNDEDASHLPH) shows a compositional bias: basic and acidic residues. Composition is skewed to polar residues over residues 760–785 (TDSS…QASV), 806–817 (NKPSVVDSNSAE), and 827–840 (SWTS…QMVK). One can recognise a GRAM 2 domain in the interval 862 to 933 (RKFRTFFALS…RDLYGLKAQK (72 aa)). UDP-alpha-D-glucose is bound by residues S1043, R1044, D1046, I1358, H1360, H1373, G1377, T1378, D1397, and Q1398. Residues 1499–1555 (NRVRSRSRSRSRSSQGRFSPRRHTVDDDGWSVVSGGSRSRSGSASAVTSPERRPLNI) are disordered. The span at 1529–1545 (SVVSGGSRSRSGSASAV) shows a compositional bias: low complexity.

Belongs to the glycosyltransferase 28 family.

It is found in the cytoplasm. It localises to the membrane. The enzyme catalyses a sterol + UDP-alpha-D-glucose = a sterol 3-beta-D-glucoside + UDP + H(+). The catalysed reaction is ergosterol + UDP-alpha-D-glucose = ergosteryl 3-beta-D-glucoside + UDP + H(+). Its function is as follows. Sterol glycosyltransferase responsible for the glycosylation of ergosterol to form ergosterol-glucoside. In Cryptococcus neoformans var. neoformans serotype D (strain JEC21 / ATCC MYA-565) (Filobasidiella neoformans), this protein is Sterol 3-beta-glucosyltransferase.